Here is a 163-residue protein sequence, read N- to C-terminus: S-ribosylhomocysteine lyase (163 aa).

Fe cation-binding residues include H54, H58, and C128.

Belongs to the LuxS family. As to quaternary structure, homodimer. Fe cation serves as cofactor.

The enzyme catalyses S-(5-deoxy-D-ribos-5-yl)-L-homocysteine = (S)-4,5-dihydroxypentane-2,3-dione + L-homocysteine. In terms of biological role, involved in the synthesis of autoinducer 2 (AI-2) which is secreted by bacteria and is used to communicate both the cell density and the metabolic potential of the environment. The regulation of gene expression in response to changes in cell density is called quorum sensing. Catalyzes the transformation of S-ribosylhomocysteine (RHC) to homocysteine (HC) and 4,5-dihydroxy-2,3-pentadione (DPD). This chain is S-ribosylhomocysteine lyase, found in Wolinella succinogenes (strain ATCC 29543 / DSM 1740 / CCUG 13145 / JCM 31913 / LMG 7466 / NCTC 11488 / FDC 602W) (Vibrio succinogenes).